Consider the following 523-residue polypeptide: Factor arrest protein 8 (523 aa).

The stretch at 26–76 (TKNERDRITWELERSEMKARIAELEGENRDLKHQLNQIQSKAVSPEGEKEE) forms a coiled coil. The segment at 61–80 (NQIQSKAVSPEGEKEEKHVP) is disordered. Basic and acidic residues predominate over residues 71 to 80 (EGEKEEKHVP). At Ser115 the chain carries Phosphoserine. A Phosphothreonine modification is found at Thr132. The tract at residues 150–171 (ALLDTKPNPKQGPSESPSPTKV) is disordered. Polar residues predominate over residues 160–171 (QGPSESPSPTKV).

Component of a complex at least composed of FAR3, FAR7, FAR8, FAR10, FAR11 and VPS64.

The protein localises to the cytoplasm. The protein resides in the endoplasmic reticulum. Functionally, participates in the control of the reentry into the cell cycle following pheromone treatment. The sequence is that of Factor arrest protein 8 (FAR8) from Saccharomyces cerevisiae (strain ATCC 204508 / S288c) (Baker's yeast).